We begin with the raw amino-acid sequence, 277 residues long: Phosphoenolpyruvate synthase regulatory protein (277 aa).

An ADP-binding site is contributed by 157–164; it reads GVSRCGKT.

The protein belongs to the pyruvate, phosphate/water dikinase regulatory protein family. PSRP subfamily.

The catalysed reaction is [pyruvate, water dikinase] + ADP = [pyruvate, water dikinase]-phosphate + AMP + H(+). The enzyme catalyses [pyruvate, water dikinase]-phosphate + phosphate + H(+) = [pyruvate, water dikinase] + diphosphate. Bifunctional serine/threonine kinase and phosphorylase involved in the regulation of the phosphoenolpyruvate synthase (PEPS) by catalyzing its phosphorylation/dephosphorylation. This is Phosphoenolpyruvate synthase regulatory protein from Shigella boydii serotype 4 (strain Sb227).